The primary structure comprises 1356 residues: Pleckstrin homology domain-containing family H member 1 (1356 aa).

Residues 27–172 (FRLQASKIRE…QDALEDLRMT (146 aa)) are a coiled coil. 3 disordered regions span residues 179–203 (VVPEGTPERDPVPSGPSDQPVEQDS), 256–314 (HLQK…PKVR), and 354–414 (LHSP…PPLH). Polar residues-rich tracts occupy residues 194–203 (PSDQPVEQDS), 256–265 (HLQKEGSPSQ), and 285–297 (VTAQGGTFPGTKT). Residues 359-407 (SSKSEARAKVREEAEKMEMEALPPSGKQEERESLKSRRGELEDVELENK) adopt a coiled-coil conformation. Composition is skewed to basic and acidic residues over residues 362–377 (SEARAKVREEAEKMEM) and 385–399 (KQEERESLKSRRGEL). Serine 451 is subject to Phosphoserine. PH domains lie at 572–666 (ALEK…SLLK) and 681–790 (KPTV…VAAG). Serine 739 bears the Phosphoserine mark. One can recognise a MyTH4 domain in the interval 826–980 (YSQEGLCASL…PSRMEVVSIL (155 aa)). Residues 991-1327 (FSIPVHFANG…NHCSATVNLS (337 aa)) form the FERM domain.

In Mus musculus (Mouse), this protein is Pleckstrin homology domain-containing family H member 1 (Plekhh1).